The following is a 1531-amino-acid chain: Myosin-17 (1531 aa).

The Myosin N-terminal SH3-like domain maps to 8 to 57 (IVGSHVWIEDPGAAWIDGEVVKINGEEVHAHTTNGKTVVANIANVFPKDT). Positions 62-732 (GGVDDMTKLS…QMAELDARRA (671 aa)) constitute a Myosin motor domain. ATP contacts are provided by residues 156–163 (GESGAGKT) and 209–217 (NNNSSRFGK). Actin-binding stretches follow at residues 495 to 529 (LIEKKPGGVIALLDEACMFPKSTHETFAQKLYQTF), 531 to 554 (NYKRFTKPKLSRTSFAISHYAGEV), 589 to 613 (FPRLPEETSSKTKFSSIGSRFKLQL), and 613 to 635 (LQSLMETLSSTEPHYIRCVKPNN). 5 IQ domains span residues 758–787 (LRGAAIVLQSNCRGKLACNLYEEMRRQAAA), 783–812 (RQAAAVKIQKIFRRHIARESYLRIRHSTIT), 806–835 (IRHSTITVQTALRGMVARNEFRFRKQMKAA), 831–860 (QMKAATIIQARLRSHLTHSYYKQLQKAALS), and 854–883 (LQKAALSTQCGWRSRVARKELRTLKMAARD). Residues 884–1056 (TGALREAKDK…VLRQQALAIS (173 aa)) adopt a coiled-coil conformation. Positions 1071-1090 (LPRTPENGNYLNGGTKTTPD) are disordered. Over residues 1076 to 1090 (ENGNYLNGGTKTTPD) the composition is skewed to polar residues. The 312-residue stretch at 1159–1470 (DRIIQTIATA…IANMRVMMTE (312 aa)) folds into the Dilute domain. S1517 bears the Phosphoserine mark.

It belongs to the TRAFAC class myosin-kinesin ATPase superfamily. Myosin family. Plant myosin class XI subfamily. Homodimer. Interacts with MYOB1, MYOB2 and MYOB3. Interacts with PHOX1 and PHOX2. Expressed ubiquitously.

Its subcellular location is the cytoplasm. Its function is as follows. Myosin heavy chain that is required for the cell cycle-regulated transport of various organelles and proteins for their segregation. Functions by binding with its tail domain to receptor proteins on organelles and exerting force with its N-terminal motor domain against actin filaments, thereby transporting its cargo along polarized actin cables. Involved in the tip growth of root hair cells and in the elongation of trichome stalk and branches. Plays a major role in trafficking of Golgi stacks, mitochondria and peroxisomes during root hair development. Acts as the primary contributor to ER streaming with a major role in the movement of Golgi bodies. Required for development of pavement cells, trichomes, and stigmatic papillae. Together with XI-F, required for the regulation of organ bending, such as gravitropic root bending. In Arabidopsis thaliana (Mouse-ear cress), this protein is Myosin-17.